Here is a 199-residue protein sequence, read N- to C-terminus: Thymidylate kinase (199 aa).

Residue 7–14 (GIDGSGKT) coordinates ATP.

This sequence belongs to the thymidylate kinase family.

It catalyses the reaction dTMP + ATP = dTDP + ADP. Phosphorylation of dTMP to form dTDP in both de novo and salvage pathways of dTTP synthesis. This is Thymidylate kinase from Tropheryma whipplei (strain Twist) (Whipple's bacillus).